The primary structure comprises 340 residues: Protein RecA (340 aa).

74-81 (GPESSGKT) provides a ligand contact to ATP.

The protein belongs to the RecA family.

It localises to the cytoplasm. In terms of biological role, can catalyze the hydrolysis of ATP in the presence of single-stranded DNA, the ATP-dependent uptake of single-stranded DNA by duplex DNA, and the ATP-dependent hybridization of homologous single-stranded DNAs. It interacts with LexA causing its activation and leading to its autocatalytic cleavage. This is Protein RecA from Porphyromonas gingivalis (strain ATCC 33277 / DSM 20709 / CIP 103683 / JCM 12257 / NCTC 11834 / 2561).